The chain runs to 295 residues: tRNA-cytidine(32) 2-sulfurtransferase (295 aa).

The PP-loop motif motif lies at 63–68 (SGGKDS). [4Fe-4S] cluster is bound by residues Cys-138, Cys-141, and Cys-229.

This sequence belongs to the TtcA family. Homodimer. The cofactor is Mg(2+). It depends on [4Fe-4S] cluster as a cofactor.

The protein resides in the cytoplasm. It carries out the reaction cytidine(32) in tRNA + S-sulfanyl-L-cysteinyl-[cysteine desulfurase] + AH2 + ATP = 2-thiocytidine(32) in tRNA + L-cysteinyl-[cysteine desulfurase] + A + AMP + diphosphate + H(+). It participates in tRNA modification. Its function is as follows. Catalyzes the ATP-dependent 2-thiolation of cytidine in position 32 of tRNA, to form 2-thiocytidine (s(2)C32). The sulfur atoms are provided by the cysteine/cysteine desulfurase (IscS) system. In Hyphomonas neptunium (strain ATCC 15444), this protein is tRNA-cytidine(32) 2-sulfurtransferase.